Consider the following 148-residue polypeptide: Nucleoside diphosphate kinase (148 aa).

ATP is bound by residues Lys9, Phe57, Arg85, Thr91, Arg102, and Asn112. His115 acts as the Pros-phosphohistidine intermediate in catalysis.

The protein belongs to the NDK family. Homotetramer. The cofactor is Mg(2+).

It localises to the cytoplasm. It catalyses the reaction a 2'-deoxyribonucleoside 5'-diphosphate + ATP = a 2'-deoxyribonucleoside 5'-triphosphate + ADP. It carries out the reaction a ribonucleoside 5'-diphosphate + ATP = a ribonucleoside 5'-triphosphate + ADP. Its function is as follows. Major role in the synthesis of nucleoside triphosphates other than ATP. The ATP gamma phosphate is transferred to the NDP beta phosphate via a ping-pong mechanism, using a phosphorylated active-site intermediate. This Macrococcus caseolyticus (strain JCSC5402) (Macrococcoides caseolyticum) protein is Nucleoside diphosphate kinase.